A 458-amino-acid chain; its full sequence is Jacalin-related lectin 22 (458 aa).

3 Jacalin-type lectin domains span residues 5-153, 160-301, and 311-453; these read YRKL…YFVL, LYKL…YFGP, and SKKL…TIVP.

Belongs to the jacalin lectin family. In terms of assembly, component of the PYK10 complex, at least composed of PYK10/BGLU23, BGLU21, BGLU22, JAL22, JAL23, PBP1/JAL30, PBP2/JAL31, JAL32, JAL33, JAL34, JAL35, GLL22 and GLL23.

Functionally, inhibitor-type lectin that may regulate the correct polymerization and activation of BGLU23/PYK10 upon tissue damage. In Arabidopsis thaliana (Mouse-ear cress), this protein is Jacalin-related lectin 22 (JAL22).